A 211-amino-acid polypeptide reads, in one-letter code: Putative transposase for insertion sequence element IS402 (211 aa).

The interval R51 to K71 is disordered.

The protein belongs to the transposase 11 family.

In terms of biological role, involved in the transposition of the insertion sequence. This chain is Putative transposase for insertion sequence element IS402, found in Burkholderia cepacia (Pseudomonas cepacia).